A 505-amino-acid chain; its full sequence is GMP synthase [glutamine-hydrolyzing] (505 aa).

In terms of domain architecture, Glutamine amidotransferase type-1 spans Ser-2–Asp-190. Catalysis depends on Cys-79, which acts as the Nucleophile. Catalysis depends on residues His-165 and Glu-167. Positions Trp-191 to Arg-380 constitute a GMPS ATP-PPase domain. Ser-218–Ser-224 serves as a coordination point for ATP.

Homodimer.

The enzyme catalyses XMP + L-glutamine + ATP + H2O = GMP + L-glutamate + AMP + diphosphate + 2 H(+). Its pathway is purine metabolism; GMP biosynthesis; GMP from XMP (L-Gln route): step 1/1. Catalyzes the synthesis of GMP from XMP. This is GMP synthase [glutamine-hydrolyzing] from Deinococcus geothermalis (strain DSM 11300 / CIP 105573 / AG-3a).